Here is a 203-residue protein sequence, read N- to C-terminus: Glutathione S-transferase 2 (203 aa).

Residues 1–78 (MPKVVFHYFG…YLGRKYGLAG (78 aa)) enclose the GST N-terminal domain. Residues tyrosine 8, tryptophan 38, lysine 42, 48-50 (GQM), and 62-63 (QS) contribute to the glutathione site. Residues 80-203 (DIEEDFEIDQ…YLDSAPKKEF (124 aa)) enclose the GST C-terminal domain.

Belongs to the GST superfamily. Sigma family. As to quaternary structure, homodimer.

The catalysed reaction is RX + glutathione = an S-substituted glutathione + a halide anion + H(+). Its function is as follows. Conjugation of reduced glutathione to a wide number of exogenous and endogenous hydrophobic electrophiles. The polypeptide is Glutathione S-transferase 2 (GST2) (Manduca sexta (Tobacco hawkmoth)).